Consider the following 164-residue polypeptide: Protein-export protein SecB (164 aa).

The protein belongs to the SecB family. As to quaternary structure, homotetramer, a dimer of dimers. One homotetramer interacts with 1 SecA dimer.

The protein localises to the cytoplasm. Functionally, one of the proteins required for the normal export of preproteins out of the cell cytoplasm. It is a molecular chaperone that binds to a subset of precursor proteins, maintaining them in a translocation-competent state. It also specifically binds to its receptor SecA. This is Protein-export protein SecB from Pseudomonas syringae pv. tomato (strain ATCC BAA-871 / DC3000).